The sequence spans 283 residues: Elongation factor Ts (283 aa).

Residues 80-83 (TDFV) are involved in Mg(2+) ion dislocation from EF-Tu.

Belongs to the EF-Ts family.

It is found in the cytoplasm. Associates with the EF-Tu.GDP complex and induces the exchange of GDP to GTP. It remains bound to the aminoacyl-tRNA.EF-Tu.GTP complex up to the GTP hydrolysis stage on the ribosome. The chain is Elongation factor Ts from Salmonella paratyphi A (strain ATCC 9150 / SARB42).